Reading from the N-terminus, the 83-residue chain is Small ribosomal subunit protein uS17 (83 aa).

It belongs to the universal ribosomal protein uS17 family. As to quaternary structure, part of the 30S ribosomal subunit.

Functionally, one of the primary rRNA binding proteins, it binds specifically to the 5'-end of 16S ribosomal RNA. In Acaryochloris marina (strain MBIC 11017), this protein is Small ribosomal subunit protein uS17.